The chain runs to 464 residues: Protein FAM90A11 (464 aa).

3 disordered regions span residues Met1–Leu42, Pro70–Ala389, and His415–Pro437. 2 stretches are compositionally biased toward basic and acidic residues: residues Gly74–Val89 and Asn97–Arg114. Positions Leu180–Leu197 are enriched in low complexity. Positions Gly341–Val356 are enriched in polar residues.

It belongs to the FAM90 family.

The sequence is that of Protein FAM90A11 from Homo sapiens (Human).